The chain runs to 447 residues: Monocarboxylate transporter 11 (447 aa).

The Cytoplasmic segment spans residues 1–11 (MTPKPAGPPDG). Transmembrane regions (helical) follow at residues 12–32 (GWGWVVAAAAFAVNGLSYGLL), 54–74 (AWVSALALAVQQAASPVGSAL), 80–100 (ARPVVMVGGVLTSLGLVFSAF), 107–127 (LYLGLGLLAGSGWALVFAPAL), 139–159 (VLAVGLALTGNGASSLLLAPA), 162–182 (FLLDTFGWRGALLLLGAVTLH), 219–239 (AFSVFALGTALIGGGYFVPYV), 249–269 (GMGGYGAALVVAVAAVGDACA), 288–308 (LVVFGSLTGLGVLAMGLVPTV), 330–350 (GSYAPLVFGVLPGLVGIGGVV), 354–374 (GLVMMLMSLGGLLGPPLSGFL), and 383–403 (ASFLVCSSFILSGSFIYMGLP). The Cytoplasmic portion of the chain corresponds to 404–447 (RALPSCRPASPPATPPPERGELLPVPQVSLLSAGGTGSIRDTTC).

It belongs to the major facilitator superfamily. Monocarboxylate porter (TC 2.A.1.13) family. In terms of assembly, interacts with isoform 2 of BSG.

The protein resides in the endoplasmic reticulum membrane. It localises to the cell membrane. It carries out the reaction pyruvate(out) + H(+)(out) = pyruvate(in) + H(+)(in). In terms of biological role, proton-linked monocarboxylate transporter. It catalyzes the transport of pyruvate across the plasma membrane. Probably involved in hepatic lipid metabolism: overexpression results in an increase of triacylglycerol(TAG) levels, small increases in intracellular diacylglycerols and decreases in lysophosphatidylcholine, cholesterol ester and sphingomyelin lipids. In Mus musculus (Mouse), this protein is Monocarboxylate transporter 11 (Slc16a11).